Here is a 365-residue protein sequence, read N- to C-terminus: N-acetylgalactosamine-N,N'-diacetylbacillosaminyl-diphospho-undecaprenol 4-alpha-N-acetylgalactosaminyltransferase (365 aa).

It belongs to the glycosyltransferase group 1 family.

It is found in the cell inner membrane. It catalyses the reaction N-acetyl-alpha-D-galactosaminyl-(1-&gt;3)-N,N'-diacetyl-alpha-D-bacillosaminyl-tri-trans,hepta-cis-undecaprenyl diphosphate + UDP-N-acetyl-alpha-D-galactosamine = N-acetyl-alpha-D-galactosaminyl-(1-&gt;4)-N-acetyl-alpha-D-galactosaminyl-(1-&gt;3)-N,N'-diacetyl-alpha-D-bacillosaminyl-tri-trans,heptacis-undecaprenyl diphosphate + UDP + H(+). The protein operates within protein modification; protein glycosylation. Its function is as follows. Adds a GalNAc residue on to the Und-PP-Bac2,4diNAc-GalNAc disaccharide in the N-linked protein glycosylation pathway. Transfers the third sugar in the heptasaccharide biosynthesis. The protein is N-acetylgalactosamine-N,N'-diacetylbacillosaminyl-diphospho-undecaprenol 4-alpha-N-acetylgalactosaminyltransferase (pglJ) of Campylobacter jejuni subsp. jejuni serotype O:2 (strain ATCC 700819 / NCTC 11168).